Consider the following 115-residue polypeptide: U3-lycotoxin-Ls1r (115 aa).

A signal peptide spans 1–20 (MKFVLLFGVLLVTLFSYSSA). The propeptide occupies 21–44 (EMLDDFHQADEDELVSLIKKEEAR). 4 cysteine pairs are disulfide-bonded: Cys48-Cys63, Cys55-Cys72, Cys62-Cys87, and Cys74-Cys85.

The protein belongs to the neurotoxin 19 (CSTX) family. 01 subfamily. In terms of tissue distribution, expressed by the venom gland.

Its subcellular location is the secreted. This chain is U3-lycotoxin-Ls1r, found in Lycosa singoriensis (Wolf spider).